A 64-amino-acid polypeptide reads, in one-letter code: Conotoxin mr5.1a (64 aa).

Residues 1 to 19 (MRCVPVFVILLLLIASAPS) form the signal peptide. The propeptide occupies 20–48 (VDARLKTKDDMPLPSSHANIKRTLQIHRN). The residue at position 60 (Glu-60) is a 4-carboxyglutamate.

Belongs to the conotoxin T superfamily. In terms of processing, contains 2 disulfide bonds that can be either 'C1-C3, C2-C4' or 'C1-C4, C2-C3', since these disulfide connectivities have been observed for conotoxins with cysteine framework V (for examples, see AC P0DQQ7 and AC P81755). In terms of tissue distribution, expressed by the venom duct.

The protein resides in the secreted. The chain is Conotoxin mr5.1a from Conus marmoreus (Marble cone).